We begin with the raw amino-acid sequence, 294 residues long: NAD kinase (294 aa).

Residue Asp-74 is the Proton acceptor of the active site. Residues 74 to 75, Lys-79, 149 to 150, Asp-179, 190 to 195, and Ala-214 each bind NAD(+); these read DG, NE, and TGYSLS.

The protein belongs to the NAD kinase family. Requires a divalent metal cation as cofactor.

It is found in the cytoplasm. The enzyme catalyses NAD(+) + ATP = ADP + NADP(+) + H(+). Its function is as follows. Involved in the regulation of the intracellular balance of NAD and NADP, and is a key enzyme in the biosynthesis of NADP. Catalyzes specifically the phosphorylation on 2'-hydroxyl of the adenosine moiety of NAD to yield NADP. In Christiangramia forsetii (strain DSM 17595 / CGMCC 1.15422 / KT0803) (Gramella forsetii), this protein is NAD kinase.